Reading from the N-terminus, the 58-residue chain is Cecropin-B (58 aa).

An N-terminal signal peptide occupies residues 1–21; the sequence is ILSFVFACLLALSAVSAAPEP.

It belongs to the cecropin family.

It localises to the secreted. Its function is as follows. Cecropins have lytic and antibacterial activity against several Gram-positive and Gram-negative bacteria. The protein is Cecropin-B (CECB) of Spodoptera litura (Asian cotton leafworm).